A 950-amino-acid chain; its full sequence is Coiled-coil domain-containing protein 80 (950 aa).

An N-terminal signal peptide occupies residues 1–21 (MTWRMGPRFTMLLAMWLVCGS). Disordered regions lie at residues 28 to 64 (TIRG…IERS), 88 to 119 (PTEP…EMIR), and 289 to 609 (QVVA…QSPK). Basic and acidic residues-rich tracts occupy residues 104-119 (PEQR…EMIR) and 308-317 (SEKKKEDPRR). The span at 348–374 (PRATTLPPAPATTVTRSTSRAVTVAAR) shows a compositional bias: low complexity. Over residues 376–385 (MTTTAFPTTQ) the composition is skewed to polar residues. A compositionally biased stretch (basic and acidic residues) spans 418-428 (SRKDQHRERPQ). Polar residues predominate over residues 435–454 (KATSLESFTNAPPTTISEPS). Basic and acidic residues-rich tracts occupy residues 462–478 (RFRD…HRDP), 487–499 (PAKE…KAQD), and 538–582 (KKHE…EKEK). Residues K545 and K548 each participate in a glycyl lysine isopeptide (Lys-Gly) (interchain with G-Cter in SUMO2) cross-link. Residues 560–587 (DKLLKSEKQMKKSEKKSKQEKEKSKKKK) are a coiled coil. The span at 598–609 (KPTNKHFTQSPK) shows a compositional bias: polar residues.

This sequence belongs to the CCDC80 family. In terms of assembly, binds to various extracellular matrix proteins. Phosphorylated. Expressed in dermal papilla and dermal fibroblasts (at protein level). Expressed in heart, thymus, placenta, pancreas, colon, epithelium, spleen and osteoblasts.

The protein localises to the secreted. The protein resides in the extracellular space. It localises to the extracellular matrix. In terms of biological role, promotes cell adhesion and matrix assembly. In Homo sapiens (Human), this protein is Coiled-coil domain-containing protein 80 (CCDC80).